We begin with the raw amino-acid sequence, 322 residues long: Putative ankyrin repeat protein L897 (322 aa).

ANK repeat units lie at residues 88-117 (DNEYYTYFALSIGAMDVFKWLISHGFSYDM), 181-210 (NIIDVIEYAVQINNCDIIKILVKKFIFWAN), and 248-277 (NKNEALKYAIMMKNYDMIELLINYNIQTDH).

This is Putative ankyrin repeat protein L897 from Acanthamoeba polyphaga (Amoeba).